Reading from the N-terminus, the 118-residue chain is Large ribosomal subunit protein bL20 (118 aa).

It belongs to the bacterial ribosomal protein bL20 family.

Functionally, binds directly to 23S ribosomal RNA and is necessary for the in vitro assembly process of the 50S ribosomal subunit. It is not involved in the protein synthesizing functions of that subunit. This is Large ribosomal subunit protein bL20 from Aliarcobacter butzleri (strain RM4018) (Arcobacter butzleri).